The sequence spans 430 residues: Resistance to inhibitors of cholinesterase protein 19 (430 aa).

One can recognise an AH domain in the interval 56–260; sequence ASDNELDTCL…TSRAFETLAE (205 aa). A disordered region spans residues 279–342; the sequence is GTKPERERKS…SPLIEDVDDE (64 aa). A compositionally biased stretch (basic and acidic residues) spans 281 to 294; sequence KPERERKSEKEESA.

In terms of assembly, interacts with the GTPase activator protein tbc-8; the interaction is direct and may be required for the activation of rab-2 and dense vesicle maturation in cholinergic motoneurons. Interacts with rund-1. In terms of tissue distribution, expressed in all neurons. Highly expressed in m2 pharyngeal neurons and some pharyngeal interneurons. Also expressed in the excretory canal and the gland cells located just below the nerve ring in the head.

It localises to the cytoplasm. Its subcellular location is the cytoplasmic vesicle membrane. In terms of biological role, may be involved in neurotransmitter secretion. In association with the GTPase activator protein tbc-8 activates rab-2 during dense core vesicle maturation in cholinergic motoneurons. The chain is Resistance to inhibitors of cholinesterase protein 19 from Caenorhabditis elegans.